A 456-amino-acid chain; its full sequence is MATNADPAPTKKPRNSRKALKQKNELVETPPSPVSVKGKSAKSFEQDLMEMQTMLEKMKIEKDKTEELLKEKDEILRKKEEELETRDAEQEKLKVELKKLQKMKEFKPNMTFACGQSSLTQAEQEKANKKKKKDCPETKRPSSSYVLWCKDQWTEVKKENPEADFKETSNILGAKWKSLSAEDKKPYEERYQVEKEAYLQVIAKEKREKEAMKLLEDDQKQRTAMELLDQYLNFVQEAEQDNKKKNKKEKDPLKPKHPVSAFLVYANERRAALREENKSVVEVAKITGEEWKNLSDKKKAPYEKVAKKNKETYLQAMEEYKRTKEEEALSQKKEEEELLKLHKQEALQMLKKKEKTDNLIKKEKATKKKKNENVDPNKPKKPASSYFLFSKDERKKLTEERPGTNNATVTALISLKWKELSEEEKQVYNGKAAKLMEAYKKEVEAYNKKSAATTSS.

4 disordered regions span residues 1–42 (MATN…KSAK), 117–142 (SSLTQAEQEKANKKKKKDCPETKRPS), 238–258 (AEQDNKKKNKKEKDPLKPKHP), and 349–389 (MLKK…YFLF). The segment covering 11-21 (KKPRNSRKALK) has biased composition (basic residues). Positions 138-206 (TKRPSSSYVL…AYLQVIAKEK (69 aa)) form a DNA-binding region, HMG box 1. Basic and acidic residues predominate over residues 240 to 254 (QDNKKKNKKEKDPLK). A DNA-binding region (HMG box 2) is located at residues 255 to 321 (PKHPVSAFLV…TYLQAMEEYK (67 aa)). The segment covering 354-363 (EKTDNLIKKE) has biased composition (basic and acidic residues). Positions 379-447 (PKKPASSYFL…AYKKEVEAYN (69 aa)) form a DNA-binding region, HMG box 3.

The protein localises to the nucleus. This is High mobility group B protein 6 (HMGB6) from Arabidopsis thaliana (Mouse-ear cress).